The primary structure comprises 481 residues: Endonuclease Bax1 (481 aa).

The N-terminal domain (NTD) stretch occupies residues 1–136; that stretch reads MLPWELARFS…EKKIIKAPTI (136 aa). The tract at residues 158–250 is central domain (CRD); that stretch reads YKLTVYVSSN…LKLANFKELK (93 aa). The segment at 260–364 is nuclease domain (NUS); it reads DSSVEEKFYK…YKRKIDISLV (105 aa). Positions 265, 297, and 310 each coordinate a divalent metal cation. A C-terminal domain (CTD) region spans residues 414–481; the sequence is PGYIFLKNYY…AIVIKDKKVN (68 aa).

Belongs to the Bax1 family. As to quaternary structure, homodimer in solution, forms a heterodimer with XPB2. It depends on a divalent metal cation as a cofactor.

In terms of biological role, a dual DNA endonuclease probably involved in nucleotide excision repair (NER). The N-terminal nuclease domain (NTD) of the XPB2-Bax1 complex cleaves on one side of a DNA bubble (which presumably mimics DNA damage), while the NUS nuclease domain cleaves the other side, respectively called 5' and 3' nuclease activities. Interaction with XPB blocks the NTD nuclease activity. Binds to and stimulates the ATPase activity (and probably also helicase activity) of XPB2. Increases affinity of XPB2 for forked DNA. Does not stimulate the DNA-dependent activity of XPB1. In an XPB2-Bax1-bubble DNA crystal (12 bp of dsDNA, a 6 base bubble and 6 bp of dsDNA) the short 6 bp arm is unwound. The 2 helicase and the ThM domains of XPB2 with the NTD and CRD domains of Bax1 encircle the DNA, forming a tunnel where the 12 bp dsDNA and the ds-ssDNA junction are located. The ThM domain is wedged between the ssDNA tails, with the 5' ssDNA contacting Bax1 and the 3' ssDNA in a channel in XPB2. The nuclease domain (NUS) of Bax1 does not contact DNA in the bubble DNA complex. The polypeptide is Endonuclease Bax1 (Sulfurisphaera tokodaii (strain DSM 16993 / JCM 10545 / NBRC 100140 / 7) (Sulfolobus tokodaii)).